Reading from the N-terminus, the 507-residue chain is ATP synthase subunit alpha, chloroplastic (507 aa).

170-177 contacts ATP; the sequence is GDRQTGKT.

Belongs to the ATPase alpha/beta chains family. F-type ATPases have 2 components, CF(1) - the catalytic core - and CF(0) - the membrane proton channel. CF(1) has five subunits: alpha(3), beta(3), gamma(1), delta(1), epsilon(1). CF(0) has four main subunits: a, b, b' and c.

It is found in the plastid. The protein localises to the chloroplast thylakoid membrane. The catalysed reaction is ATP + H2O + 4 H(+)(in) = ADP + phosphate + 5 H(+)(out). Its function is as follows. Produces ATP from ADP in the presence of a proton gradient across the membrane. The alpha chain is a regulatory subunit. The sequence is that of ATP synthase subunit alpha, chloroplastic from Nandina domestica (Heavenly bamboo).